Reading from the N-terminus, the 535-residue chain is MALAFDEYGRPFIILREQEKKSRLQGLDAHKANIAAAKAIARILRTSLGPKGMDKMLQSPDGDVTITNDGATILELMDVDNQIAKLLVELSRSQDYDIGDGTTGVVVMAGALLEQAEKLLERGIHPIRVAEGYEMASRIAVDHLESISTKYEFSATDIEPLVQTCMTTLSSKIVSRCKRALAEISVKAVLAVADLERKDVNLDLIKVEGKVGGKLEDTELVEGIIVDKDMSHPQMPKRIYDAHIAILTCPFEPPKPKTKHKVDIDTVEKFQTLRGQEQKYFDEMVQKCKDVGATLVICQWGFDDEANHLLMQRELPAVRWVGGVELELIAIATGGRIVPRFQELSTEKLGKAGLVREKSFGTTKDRMLYIEKCANSKAVTIFIRGGNKMMIEETKRSIHDALCVARNLIINNSIVYGGGSAEISCSIAVEAAADRHPGVEQYAIRAFADALDAIPLALAENSGLPPIDTLTVVKSQHVKENNSRCGIDCNDVGTNDMKEQNVFETLIGKQQQILLATQVVKMILKIDDVITPSEY.

It belongs to the TCP-1 chaperonin family. Heterooligomeric complex of about 850 to 900 kDa that forms two stacked rings, 12 to 16 nm in diameter.

The protein resides in the cytoplasm. Its function is as follows. Molecular chaperone; assists the folding of proteins upon ATP hydrolysis. Known to play a role, in vitro, in the folding of actin and tubulin. This is T-complex protein 1 subunit epsilon from Avena sativa (Oat).